We begin with the raw amino-acid sequence, 500 residues long: Type-2 serine--tRNA ligase (500 aa).

An L-serine-binding site is contributed by Ala-305. Cys-307 lines the Zn(2+) pocket. Residue Arg-337 coordinates L-serine. ATP contacts are provided by residues 337–339 (RYE) and 348–349 (RV). L-serine-binding positions include 354–356 (RIE) and Gln-401. Glu-356 contacts Zn(2+). Glu-430 is an ATP binding site. L-serine is bound at residue Asn-433. Cys-459 lines the Zn(2+) pocket. Residue Arg-466 coordinates ATP.

The protein belongs to the class-II aminoacyl-tRNA synthetase family. Type-2 seryl-tRNA synthetase subfamily. In terms of assembly, homodimer. The cofactor is Zn(2+).

Its subcellular location is the cytoplasm. The catalysed reaction is tRNA(Ser) + L-serine + ATP = L-seryl-tRNA(Ser) + AMP + diphosphate + H(+). The enzyme catalyses tRNA(Sec) + L-serine + ATP = L-seryl-tRNA(Sec) + AMP + diphosphate + H(+). It functions in the pathway aminoacyl-tRNA biosynthesis; selenocysteinyl-tRNA(Sec) biosynthesis; L-seryl-tRNA(Sec) from L-serine and tRNA(Sec): step 1/1. Catalyzes the attachment of serine to tRNA(Ser). Is also able to aminoacylate tRNA(Sec) with serine, to form the misacylated tRNA L-seryl-tRNA(Sec), which will be further converted into selenocysteinyl-tRNA(Sec). The chain is Type-2 serine--tRNA ligase from Methanothrix thermoacetophila (strain DSM 6194 / JCM 14653 / NBRC 101360 / PT) (Methanosaeta thermophila).